Consider the following 209-residue polypeptide: Ribonuclease HII (209 aa).

In terms of domain architecture, RNase H type-2 spans 25–209 (RRIAGIDEAG…ATFRGVREYL (185 aa)). 3 residues coordinate a divalent metal cation: Asp-31, Glu-32, and Asp-123.

It belongs to the RNase HII family. Mn(2+) serves as cofactor. Mg(2+) is required as a cofactor.

It localises to the cytoplasm. The catalysed reaction is Endonucleolytic cleavage to 5'-phosphomonoester.. Functionally, endonuclease that specifically degrades the RNA of RNA-DNA hybrids. The polypeptide is Ribonuclease HII (Syntrophotalea carbinolica (strain DSM 2380 / NBRC 103641 / GraBd1) (Pelobacter carbinolicus)).